The chain runs to 250 residues: DNA repair protein RecO (250 aa).

Belongs to the RecO family.

Involved in DNA repair and RecF pathway recombination. This chain is DNA repair protein RecO, found in Staphylococcus haemolyticus (strain JCSC1435).